Here is a 345-residue protein sequence, read N- to C-terminus: D-erythrose-4-phosphate dehydrogenase (345 aa).

11–12 is an NAD(+) binding site; it reads RI. Substrate-binding positions include 158-160, Arg-204, 217-218, and Arg-240; these read SCT and TK. Catalysis depends on Cys-159, which acts as the Nucleophile. Asn-322 serves as a coordination point for NAD(+).

Belongs to the glyceraldehyde-3-phosphate dehydrogenase family. Epd subfamily. Homotetramer.

The protein resides in the cytoplasm. It carries out the reaction D-erythrose 4-phosphate + NAD(+) + H2O = 4-phospho-D-erythronate + NADH + 2 H(+). Its pathway is cofactor biosynthesis; pyridoxine 5'-phosphate biosynthesis; pyridoxine 5'-phosphate from D-erythrose 4-phosphate: step 1/5. In terms of biological role, catalyzes the NAD-dependent conversion of D-erythrose 4-phosphate to 4-phosphoerythronate. The sequence is that of D-erythrose-4-phosphate dehydrogenase from Vibrio parahaemolyticus serotype O3:K6 (strain RIMD 2210633).